Consider the following 82-residue polypeptide: Chaplin-E (82 aa).

An N-terminal signal peptide occupies residues 1–27 (MKNLKKAAAVTMVAGGLIAAGAGMASA). The Chaplin domain maps to 41 to 81 (SPGVASGNLVQAPIHIPVNAVGNSVNVIGVLNPAFGNLGVN).

The protein belongs to the chaplin family. Short chaplin subfamily.

The protein localises to the cell surface. Its subcellular location is the secreted. It localises to the cell wall. It is found in the fimbrium. Functionally, one of 8 partially redundant surface-active proteins required for efficient formation of aerial mycelium; the short chaplins assemble into a hydrophobic, amyloidal fibrillar surface layer that envelopes and protects aerial hyphae and spores, presumably anchored to the long chaplins. Chaplins have an overlapping function with the surface-active SapB peptide; chaplins are essential on minimal medium while on rich medium both chaplins and SapB are required for efficient aerial hyphae formation. Chaplins are also involved in cell attachment to a hydrophobic surface. Forms amyloid fibrils in vitro probably composed of stacked beta-sheets, at low extracellular concentrations individually restores the ability to form aerial hyphae to a chaplin-deficient strain, but does so less well than other short chaplins. A small chaplin extract (ChpD, ChpE, ChpF, ChpG and ChpH) self-assembles into 2 different amyloids; small fibrils at the air-water interface form an amphipathic membrane that resembles spore-surface structures involved in aerial hyphae formation, and hydrophilic fibrils in solution that resemble the fibers that attach cells to a hydrophobic surface. At the air-water interface the hydrophilic surface is in contact with water (probably equivalent to the peptidoglycan layer), while the hydrophobic face is exposed to the air, making the surface of the aerial hyphae hydrophobic. A minimal chaplin strain capable of forming aerial mycelium/hyphae on minimal medium contains ChpC, ChpE and ChpH. The strain also has restored rodlet formation on the hyphae surface. A second strain with ChpA, ChpD and ChpE makes slightly less robust hyphae. This essential chaplin may coordinate the assembly and/or polymerization of the other chaplins. A small chaplin extract applied to a chaplin-deficient strain restores aerial hyphae formation. The small chaplin extract forms an amyloid-like structure similar to that seen on the surface of cells without rodlets (rdlA-rdlB deletions), and is highly surface active, reducing surface tension from 72 to 26 mJ/m(2), which probably allows escape of hyphae from an aqueous environment into air. This Streptomyces coelicolor (strain ATCC BAA-471 / A3(2) / M145) protein is Chaplin-E.